We begin with the raw amino-acid sequence, 350 residues long: Cobalt-precorrin-5B C(1)-methyltransferase (350 aa).

It belongs to the CbiD family.

The enzyme catalyses Co-precorrin-5B + S-adenosyl-L-methionine = Co-precorrin-6A + S-adenosyl-L-homocysteine. It participates in cofactor biosynthesis; adenosylcobalamin biosynthesis; cob(II)yrinate a,c-diamide from sirohydrochlorin (anaerobic route): step 6/10. Its function is as follows. Catalyzes the methylation of C-1 in cobalt-precorrin-5B to form cobalt-precorrin-6A. The polypeptide is Cobalt-precorrin-5B C(1)-methyltransferase (Sulfurisphaera tokodaii (strain DSM 16993 / JCM 10545 / NBRC 100140 / 7) (Sulfolobus tokodaii)).